The chain runs to 310 residues: Putative S-adenosyl-L-methionine-dependent methyltransferase MAB_4587c (310 aa).

S-adenosyl-L-methionine is bound by residues aspartate 126 and aspartate 155–leucine 156.

This sequence belongs to the UPF0677 family.

In terms of biological role, exhibits S-adenosyl-L-methionine-dependent methyltransferase activity. In Mycobacteroides abscessus (strain ATCC 19977 / DSM 44196 / CCUG 20993 / CIP 104536 / JCM 13569 / NCTC 13031 / TMC 1543 / L948) (Mycobacterium abscessus), this protein is Putative S-adenosyl-L-methionine-dependent methyltransferase MAB_4587c.